The sequence spans 431 residues: Gamma-glutamyl phosphate reductase (431 aa).

It belongs to the gamma-glutamyl phosphate reductase family.

It is found in the cytoplasm. It carries out the reaction L-glutamate 5-semialdehyde + phosphate + NADP(+) = L-glutamyl 5-phosphate + NADPH + H(+). Its pathway is amino-acid biosynthesis; L-proline biosynthesis; L-glutamate 5-semialdehyde from L-glutamate: step 2/2. Its function is as follows. Catalyzes the NADPH-dependent reduction of L-glutamate 5-phosphate into L-glutamate 5-semialdehyde and phosphate. The product spontaneously undergoes cyclization to form 1-pyrroline-5-carboxylate. This Methylobacterium sp. (strain 4-46) protein is Gamma-glutamyl phosphate reductase.